The chain runs to 204 residues: Protein Mis18-alpha (204 aa).

3 positions are modified to phosphoserine: Ser-13, Ser-16, and Ser-17. Residues 51 to 149 (PLVFLCARCR…SVEAVESYTL (99 aa)) form the Mis18 domain. Residues Cys-56, Cys-59, Cys-112, and Cys-115 each contribute to the Zn(2+) site. Residue Lys-133 forms a Glycyl lysine isopeptide (Lys-Gly) (interchain with G-Cter in SUMO2) linkage. At Ser-204 the chain carries Phosphoserine.

The protein belongs to the mis18 family. Homodimer, and heterodimer with OIP5/MIS18B. Identified in a complex containing MIS18A, OIP5/MIS18B, MIS18BP1, RBBP7 and RBBP4.

It localises to the nucleus. Its subcellular location is the chromosome. The protein resides in the centromere. Required for recruitment of CENPA to centromeres and normal chromosome segregation during mitosis. In Mus musculus (Mouse), this protein is Protein Mis18-alpha (Mis18a).